Reading from the N-terminus, the 321-residue chain is Lipoyl synthase (321 aa).

Residues Cys68, Cys73, Cys79, Cys94, Cys98, Cys101, and Ser308 each coordinate [4Fe-4S] cluster. In terms of domain architecture, Radical SAM core spans 80 to 297; that stretch reads FNHGTATFMI…KDYAEEIGFT (218 aa).

The protein belongs to the radical SAM superfamily. Lipoyl synthase family. The cofactor is [4Fe-4S] cluster.

The protein localises to the cytoplasm. The catalysed reaction is [[Fe-S] cluster scaffold protein carrying a second [4Fe-4S](2+) cluster] + N(6)-octanoyl-L-lysyl-[protein] + 2 oxidized [2Fe-2S]-[ferredoxin] + 2 S-adenosyl-L-methionine + 4 H(+) = [[Fe-S] cluster scaffold protein] + N(6)-[(R)-dihydrolipoyl]-L-lysyl-[protein] + 4 Fe(3+) + 2 hydrogen sulfide + 2 5'-deoxyadenosine + 2 L-methionine + 2 reduced [2Fe-2S]-[ferredoxin]. The protein operates within protein modification; protein lipoylation via endogenous pathway; protein N(6)-(lipoyl)lysine from octanoyl-[acyl-carrier-protein]: step 2/2. In terms of biological role, catalyzes the radical-mediated insertion of two sulfur atoms into the C-6 and C-8 positions of the octanoyl moiety bound to the lipoyl domains of lipoate-dependent enzymes, thereby converting the octanoylated domains into lipoylated derivatives. The sequence is that of Lipoyl synthase from Shewanella loihica (strain ATCC BAA-1088 / PV-4).